The following is a 315-amino-acid chain: Acetyl-coenzyme A carboxylase carboxyl transferase subunit alpha (315 aa).

The 254-residue stretch at leucine 36–isoleucine 289 folds into the CoA carboxyltransferase C-terminal domain.

The protein belongs to the AccA family. In terms of assembly, acetyl-CoA carboxylase is a heterohexamer composed of biotin carboxyl carrier protein (AccB), biotin carboxylase (AccC) and two subunits each of ACCase subunit alpha (AccA) and ACCase subunit beta (AccD).

The protein resides in the cytoplasm. The catalysed reaction is N(6)-carboxybiotinyl-L-lysyl-[protein] + acetyl-CoA = N(6)-biotinyl-L-lysyl-[protein] + malonyl-CoA. The protein operates within lipid metabolism; malonyl-CoA biosynthesis; malonyl-CoA from acetyl-CoA: step 1/1. Its function is as follows. Component of the acetyl coenzyme A carboxylase (ACC) complex. First, biotin carboxylase catalyzes the carboxylation of biotin on its carrier protein (BCCP) and then the CO(2) group is transferred by the carboxyltransferase to acetyl-CoA to form malonyl-CoA. This chain is Acetyl-coenzyme A carboxylase carboxyl transferase subunit alpha, found in Francisella tularensis subsp. tularensis (strain FSC 198).